Reading from the N-terminus, the 498-residue chain is Na(+)/H(+) exchange regulatory cofactor NHE-RF4 (498 aa).

PDZ domains follow at residues 49–130, 157–235, 263–346, and 394–475; these read FCLL…LAQH, LCHV…AGLE, CLNI…VDPE, and QCFL…GARN. Ser-329 is subject to Phosphoserine.

As to quaternary structure, interacts with the C-terminal region of GUCY2C. Interacts with C-terminal region of SLC9A3 and the interactions decrease in response to elevated calcium ion levels. Interacts with the C-terminal region of SLC34A1. Interacts with USP2 isoform 2. Interacts (via the third PDZ domain) with SLC26A3 (via PDZ-binding motif). This interaction leads to decreased expression of SLC26A3 on the cell membrane resulting in its reduced exchanger activity. Post-translationally, phosphorylation at Ser-329 negatively regulates its interaction with SLC26A3. Expressed in kidney and small intestine. Not detected in heart, brain, spleen, lung, liver, skeletal muscle or testis.

It is found in the cell membrane. Its subcellular location is the cytoplasm. In terms of biological role, acts as a regulatory protein that associates with GUCY2C and negatively modulates its heat-stable enterotoxin-mediated activation. Stimulates SLC9A3 activity in the presence of elevated calcium ions. The protein is Na(+)/H(+) exchange regulatory cofactor NHE-RF4 (Nherf4) of Mus musculus (Mouse).